A 530-amino-acid chain; its full sequence is MLNYKNLNELENFKILEGIAPEVLKTALTGKRIKEYDITIEGDSVHYNYASKQINETHLKIFQNLSDEANLIEKYKEVLDGEKINISENRKVLHHLTRGQIGKDVIEDNKENMREFFQSELEKIYNFAKQIHSGNIKSSNGKKFKNVVQIGIGGSSLGPKALYSSIKNYAKKHNLALMNGYFISNIDPDESEEVLSSINVDETLFIIVSKSGNTLETKANMQFLINKLKLNGIKEYKKQMVIITLKDSMLAIEEKGYLEYFFMHDSIGGRFSPTSAVGLTLLTLCFTEKVAKEILKGANEADKKSLNKNVKDNASLLAALISIYERNVLNYSSNCIIAYSKAMENFYLHLQQLEMESNGKSVNRFNETINYKTVRIIWGGIGTDVQHSFFQMLHQGTDIVPMDFIGFNETQLKEDVISDNSSSNDKLKANLIAQIIAFSKGKENSNKNKNFQGERPSALIYSKELTPYAIGAILSHYENKVMFEGFLLNINSFDQEGVQLGKIIANQILKNDNFKDEVIESYSKKILKKF.

The active-site Proton donor is the Glu356. Active-site residues include His387 and Lys502.

Belongs to the GPI family.

It is found in the cytoplasm. The enzyme catalyses alpha-D-glucose 6-phosphate = beta-D-fructose 6-phosphate. The protein operates within carbohydrate biosynthesis; gluconeogenesis. It participates in carbohydrate degradation; glycolysis; D-glyceraldehyde 3-phosphate and glycerone phosphate from D-glucose: step 2/4. Functionally, catalyzes the reversible isomerization of glucose-6-phosphate to fructose-6-phosphate. The polypeptide is Glucose-6-phosphate isomerase (Borreliella burgdorferi (strain ATCC 35210 / DSM 4680 / CIP 102532 / B31) (Borrelia burgdorferi)).